The sequence spans 250 residues: DNA polymerase sliding clamp (250 aa).

It belongs to the PCNA family. In terms of assembly, homotrimer. The subunits circularize to form a toroid; DNA passes through its center. Replication factor C (RFC) is required to load the toroid on the DNA.

Functionally, sliding clamp subunit that acts as a moving platform for DNA processing. Responsible for tethering the catalytic subunit of DNA polymerase and other proteins to DNA during high-speed replication. The polypeptide is DNA polymerase sliding clamp (Methanococcus maripaludis (strain C7 / ATCC BAA-1331)).